We begin with the raw amino-acid sequence, 340 residues long: Ava biosynthesis cluster protein G (340 aa).

Helical transmembrane passes span 15–35 (WSAFWLWAIIGGYFAAFNIWN), 81–101 (FMISTDFITSACSVIALLQFV), 118–138 (AFFVMMGFGAPSGIMVAVHAF), and 148–168 (LSIMLTGVLTICFLATSFLCI). N-linked (GlcNAc...) asparagine glycosylation occurs at Asn-171. Helical transmembrane passes span 219 to 239 (FSSVYLIIPEVMNWTLGYVAF) and 315 to 335 (SALTAVCLLLRYVGLILWLQI).

The protein resides in the membrane. It functions in the pathway secondary metabolite biosynthesis. Functionally, part of the cluster that mediates the biosynthesis of a highly modified cyclo-arginine-tryptophan dipeptide (cRW). The first step of the pathway is perfornmed by the arginine-containing cyclodipeptide synthase (RCPDS) avaA that acts as the scaffold-generating enzyme and is responsible for formation of the cyclo-Arg-Trp (cRW) diketopiperazine. AvaB then acts as a multifunctional flavoenzyme that is responsible for generating the cyclo-Arg-formylkynurenine DKP, which can be deformylated by avaC. AvaB then further catalyzes an additional N-oxidation followed by cyclization and dehydration. The next step is an N-acetylation of the guanidine group catalyzed by the arginine N-acetyltransferase avaD. The roles of the additional enzymes identified within the ava cluster still have to be determined. This Aspergillus versicolor protein is Ava biosynthesis cluster protein G.